The following is a 337-amino-acid chain: tRNA N6-adenosine threonylcarbamoyltransferase (337 aa).

Fe cation contacts are provided by His-114 and His-118. Residues 136 to 140 (LVSGG), Asp-169, Gly-182, Asp-186, and Asn-275 contribute to the substrate site. Asp-301 contributes to the Fe cation binding site.

It belongs to the KAE1 / TsaD family. Fe(2+) is required as a cofactor.

It localises to the cytoplasm. The enzyme catalyses L-threonylcarbamoyladenylate + adenosine(37) in tRNA = N(6)-L-threonylcarbamoyladenosine(37) in tRNA + AMP + H(+). Required for the formation of a threonylcarbamoyl group on adenosine at position 37 (t(6)A37) in tRNAs that read codons beginning with adenine. Is involved in the transfer of the threonylcarbamoyl moiety of threonylcarbamoyl-AMP (TC-AMP) to the N6 group of A37, together with TsaE and TsaB. TsaD likely plays a direct catalytic role in this reaction. The chain is tRNA N6-adenosine threonylcarbamoyltransferase from Streptococcus uberis (strain ATCC BAA-854 / 0140J).